The chain runs to 128 residues: Large ribosomal subunit protein bL20c (128 aa).

The protein belongs to the bacterial ribosomal protein bL20 family.

The protein localises to the plastid. The protein resides in the chloroplast. Its function is as follows. Binds directly to 23S ribosomal RNA and is necessary for the in vitro assembly process of the 50S ribosomal subunit. It is not involved in the protein synthesizing functions of that subunit. The polypeptide is Large ribosomal subunit protein bL20c (Gossypium barbadense (Sea Island cotton)).